The chain runs to 257 residues: MPRIGIIGGSGVYGVFEPKETVKVHTPYGRPSAPVEIGEIEGVEVAFIPRHGKHHEFPPHEVPYRANIWALKELGVERVIGITAVGSLREEYKPGDIVITDQFIDFTKKRDYTFYNGPRVAHVSMADPFCPEMRKIFYETAKELGFPVHEKGTYVCIEGPRFSTRAESFMFRQFAHIIGMTLVPEVNLARELGMCYVNIATVTDYDVWADKPVDAQEVLKVMAENNYKVQELLKKGIPKIPEERHCGCADVLKTMFV.

Residues serine 10, arginine 50 to histidine 51, and threonine 83 to alanine 84 each bind phosphate. Methionine 180 contacts substrate. Threonine 181 is a phosphate binding site. A substrate-binding site is contributed by aspartate 204 to aspartate 206.

The protein belongs to the PNP/MTAP phosphorylase family. MTAP subfamily. Homohexamer. Dimer of a homotrimer.

The enzyme catalyses S-methyl-5'-thioadenosine + phosphate = 5-(methylsulfanyl)-alpha-D-ribose 1-phosphate + adenine. The catalysed reaction is adenosine + phosphate = alpha-D-ribose 1-phosphate + adenine. Its pathway is amino-acid biosynthesis; L-methionine biosynthesis via salvage pathway; S-methyl-5-thio-alpha-D-ribose 1-phosphate from S-methyl-5'-thioadenosine (phosphorylase route): step 1/1. Functionally, catalyzes the reversible phosphorylation of S-methyl-5'-thioadenosine (MTA) to adenine and 5-methylthioribose-1-phosphate. Involved in the breakdown of MTA, a major by-product of polyamine biosynthesis. Responsible for the first step in the methionine salvage pathway after MTA has been generated from S-adenosylmethionine. Has broad substrate specificity with 6-aminopurine nucleosides as preferred substrates. Can also use adenosine as substrate to form ribose 1-phosphate. This Thermococcus kodakarensis (strain ATCC BAA-918 / JCM 12380 / KOD1) (Pyrococcus kodakaraensis (strain KOD1)) protein is S-methyl-5'-thioadenosine phosphorylase.